Consider the following 325-residue polypeptide: uncharacterized protein (325 aa).

Coiled-coil stretches lie at residues 38-69 and 201-229; these read VHVANNLNNFVQQHKQLQNQMPQFQNQFQNQS and ANTDRFNAELELKESDLEKINETLKLEFK.

This is an uncharacterized protein from Acanthamoeba polyphaga (Amoeba).